A 264-amino-acid polypeptide reads, in one-letter code: [LysW]-aminoadipate/[LysW]-glutamate kinase (264 aa).

Residues 35–36, Arg62, and Asn167 contribute to the substrate site; that span reads GG.

This sequence belongs to the acetylglutamate kinase family. LysZ subfamily.

It is found in the cytoplasm. It carries out the reaction [amino-group carrier protein]-C-terminal-N-(1,4-dicarboxybutan-1-yl)-L-glutamine + ATP = [amino-group carrier protein]-C-terminal-N-(1-carboxy-5-phosphooxy-5-oxopentan-1-yl)-L-glutamine + ADP. The catalysed reaction is [amino-group carrier protein]-C-terminal-gamma-(L-glutamyl)-L-glutamate + ATP = [amino-group carrier protein]-C-terminal-gamma-(5-phospho-L-glutamyl)-L-glutamate + ADP. Its pathway is amino-acid biosynthesis; L-lysine biosynthesis via AAA pathway; L-lysine from L-alpha-aminoadipate (Thermus route): step 2/5. It functions in the pathway amino-acid biosynthesis; L-arginine biosynthesis. Functionally, involved in both the arginine and lysine biosynthetic pathways. Phosphorylates the LysW-bound precursors glutamate (for arginine biosynthesis), respectively alpha-aminoadipate (for lysine biosynthesis). In Saccharolobus islandicus (strain L.S.2.15 / Lassen #1) (Sulfolobus islandicus), this protein is [LysW]-aminoadipate/[LysW]-glutamate kinase.